A 300-amino-acid polypeptide reads, in one-letter code: MLPLLAALLAAACPLPPVRGGAADAPGLLGVPSNASVNASSADEPIAPRLLASAAPGPPERPGPEEAAAAAAPCNISVQRQMLSSLLVRWGRPRGFQCDLLLFSTNAHGRAFFAAAFHRVGPPLLIEHLGLAAGGAQQDLRLCVGCGWVRGRRTGRLRPAAAPSAAAATAGAPTALPAYPAAEPPGPLWLQGEPLHFCCLDFSLEELQGEPGWRLNRKPIESTLVACFMTLVIVVWSVAALIWPVPIIAGFLPNGMEQRRTTASTTAATPAAVPAGTTAAAAAAAAAAAAAAVTSGVATK.

An N-terminal signal peptide occupies residues 1–20 (MLPLLAALLAAACPLPPVRG). An N-linked (GlcNAc...) asparagine glycan is attached at N75. Transmembrane regions (helical) follow at residues 231–251 (LVIV…IAGF) and 273–293 (VPAG…AAAV).

This sequence belongs to the TMEM158 family. N-glycosylated.

It is found in the membrane. Receptor for brain injury-derived neurotrophic peptide (BINP), a synthetic 13-mer peptide. The protein is Transmembrane protein 158 (TMEM158) of Homo sapiens (Human).